Reading from the N-terminus, the 196-residue chain is Type-4 uracil-DNA glycosylase (196 aa).

2 residues coordinate [4Fe-4S] cluster: cysteine 13 and cysteine 16. Uracil is bound by residues 40–42 (GEA), phenylalanine 54, and asparagine 80. [4Fe-4S] cluster is bound by residues cysteine 84 and cysteine 100. Histidine 162 lines the uracil pocket.

Belongs to the uracil-DNA glycosylase (UDG) superfamily. Type 4 (UDGa) family.

The enzyme catalyses Hydrolyzes single-stranded DNA or mismatched double-stranded DNA and polynucleotides, releasing free uracil.. Functionally, removes uracil bases that are present in DNA as a result of either deamination of cytosine or misincorporation of dUMP instead of dTMP. Can remove uracil from double-stranded DNA containing either a U/G or U/A base pair as well as from single-stranded DNA. This is Type-4 uracil-DNA glycosylase from Pyrobaculum aerophilum (strain ATCC 51768 / DSM 7523 / JCM 9630 / CIP 104966 / NBRC 100827 / IM2).